The chain runs to 218 residues: Cytochrome c biogenesis ATP-binding export protein CcmA (218 aa).

The ABC transporter domain maps to 2-217; the sequence is LEAKNLTCIR…KSCLSACCAV (216 aa). 34 to 41 contributes to the ATP binding site; the sequence is GPNGAGKT.

It belongs to the ABC transporter superfamily. CcmA exporter (TC 3.A.1.107) family. The complex is composed of two ATP-binding proteins (CcmA) and two transmembrane proteins (CcmB).

Its subcellular location is the cell inner membrane. The catalysed reaction is heme b(in) + ATP + H2O = heme b(out) + ADP + phosphate + H(+). In terms of biological role, part of the ABC transporter complex CcmAB involved in the biogenesis of c-type cytochromes; once thought to export heme, this seems not to be the case, but its exact role is uncertain. Responsible for energy coupling to the transport system. This is Cytochrome c biogenesis ATP-binding export protein CcmA from Yersinia pseudotuberculosis serotype I (strain IP32953).